A 480-amino-acid chain; its full sequence is MSAEVIHQVEEALDTDEKEMLLFSCRDVAIDVVPPNVRDLLDILRERGKLSVGDLAELLYRVRRFDLLKRILKMDRKAVETHLLRNPHLVSDYRVLMAEIGEDLDKSDVSSLIFLMKDYMGRGKISKEKSFLDLVVELEKLNLVAPDQLDLLEKCLKNIHRIDLKTKIQKYKQSVQGAGTSYRNVLQAAIQKSFKDPSNNFRLHNGRSKEQRLKEQLGTQQEPVKKSIQESEAFLPQSVPEERYKMKSKPLGICLIIDCIGNETELLRDTFTSLGYEVQKFLHLSMHGISQILGQFACMPEHRDYDSFVCVLVSRGGSQSVYGVDQTHSGLPLHHIRRMFMGDSCPYLAGKPKIFFIQNYVVSEGQLEDSSLLEVDGPAMKNVEFKAQKRGLCTVHREADFFWSLCTADVSLLEWSHSSPSLYLQCLSQKLRQERKRPLLDLHIELNGYMYDWNSRVSAKEKYYVWLQHTLRKKLIPSYT.

2 consecutive DED domains span residues 1–73 and 92–170; these read MSAE…RILK and DYRV…KIQK. Positions 1–195 are interaction with CASP8; it reads MSAEVIHQVE…LQAAIQKSFK (195 aa). The segment at 1-227 is interaction with FADD; it reads MSAEVIHQVE…GTQQEPVKKS (227 aa). Positions 1–305 are interaction with CASP8 propeptide; sequence MSAEVIHQVE…FACMPEHRDY (305 aa). The tract at residues 1-435 is not proteolytically processed and involved in apoptosis inhibition; that stretch reads MSAEVIHQVE…CLSQKLRQER (435 aa). The interval 192-435 is interaction with CASP3; it reads KSFKDPSNNF…CLSQKLRQER (244 aa). An interaction with TRAF1 and TRAF2 region spans residues 192–480; the sequence is KSFKDPSNNF…LRKKLIPSYT (289 aa). Positions 217-480 are interaction with CASP8 subunits p18 and p10; sequence LGTQQEPVKK…LRKKLIPSYT (264 aa). The caspase stretch occupies residues 263–358; it reads ETELLRDTFT…AGKPKIFFIQ (96 aa). An interaction with CASP8 region spans residues 370–480; that stretch reads SSLLEVDGPA…LRKKLIPSYT (111 aa).

The protein belongs to the peptidase C14A family. As to quaternary structure, TNFRSF6 stimulation triggers recruitment to the death-inducing signaling complex (DISC) formed by TNFRSF6, FADD and CASP8. A proteolytic fragment (p43) stays associated with the DISC. Interacts with RIPK1. In terms of processing, proteolytically processed by CASP8 generating subunit p43 and p12.

Apoptosis regulator protein which may function as a crucial link between cell survival and cell death pathways in mammalian cells. Acts as an inhibitor of TNFRSF6 mediated apoptosis. A proteolytic fragment (p43) is likely retained in the death-inducing signaling complex (DISC) thereby blocking further recruitment and processing of caspase-8 at the complex. Full length and shorter isoforms have been shown either to induce apoptosis or to reduce TNFRSF-triggered apoptosis. Lacks enzymatic (caspase) activity. The chain is CASP8 and FADD-like apoptosis regulator (CFLAR) from Pongo abelii (Sumatran orangutan).